Consider the following 152-residue polypeptide: Transcriptional regulator MraZ (152 aa).

SpoVT-AbrB domains lie at 5–52 (ATMV…PLPE) and 81–124 (ASEC…DEQT).

This sequence belongs to the MraZ family. In terms of assembly, forms oligomers.

The protein localises to the cytoplasm. Its subcellular location is the nucleoid. Its function is as follows. Negatively regulates its own expression and that of the subsequent genes in the proximal part of the division and cell wall (dcw) gene cluster. Acts by binding directly to DNA. May also regulate the expression of genes outside the dcw cluster. The protein is Transcriptional regulator MraZ of Serratia proteamaculans (strain 568).